The primary structure comprises 323 residues: NADH-cytochrome b5 reductase 2 (323 aa).

Residues 30–46 traverse the membrane as a helical segment; it reads LAPIYTAVGLTGLSVGL. Positions 72–177 constitute an FAD-binding FR-type domain; sequence QGWVDLKLSE…KGPLPKYQWE (106 aa). 180-215 contributes to the FAD binding site; the sequence is KHEHIALIAGGTGITPMYQLIRQIFKNPDDKTKVTL.

Belongs to the flavoprotein pyridine nucleotide cytochrome reductase family. FAD serves as cofactor.

Its subcellular location is the mitochondrion outer membrane. It catalyses the reaction 2 Fe(III)-[cytochrome b5] + NADH = 2 Fe(II)-[cytochrome b5] + NAD(+) + H(+). Its function is as follows. May mediate the reduction of outer membrane cytochrome b5. This is NADH-cytochrome b5 reductase 2 (mcr1) from Aspergillus oryzae (strain ATCC 42149 / RIB 40) (Yellow koji mold).